A 114-amino-acid polypeptide reads, in one-letter code: Probable 4-amino-4-deoxy-L-arabinose-phosphoundecaprenol flippase subunit ArnE (114 aa).

Helical transmembrane passes span 41–61 (PWLIASVAALGCGMLLWIYLL), 64–84 (LPLSMAYPMLSINLVLVLVGS), and 94–114 (YHNWLGVGAIIVGALLLGGLL). Positions 43 to 112 (LIASVAALGC…IIVGALLLGG (70 aa)) constitute an EamA domain.

The protein belongs to the ArnE family. Heterodimer of ArnE and ArnF.

Its subcellular location is the cell inner membrane. The protein operates within bacterial outer membrane biogenesis; lipopolysaccharide biosynthesis. Translocates 4-amino-4-deoxy-L-arabinose-phosphoundecaprenol (alpha-L-Ara4N-phosphoundecaprenol) from the cytoplasmic to the periplasmic side of the inner membrane. The protein is Probable 4-amino-4-deoxy-L-arabinose-phosphoundecaprenol flippase subunit ArnE of Aeromonas hydrophila subsp. hydrophila (strain ATCC 7966 / DSM 30187 / BCRC 13018 / CCUG 14551 / JCM 1027 / KCTC 2358 / NCIMB 9240 / NCTC 8049).